We begin with the raw amino-acid sequence, 90 residues long: Small ribosomal subunit protein bS16 (90 aa).

The protein belongs to the bacterial ribosomal protein bS16 family.

In Lactobacillus acidophilus (strain ATCC 700396 / NCK56 / N2 / NCFM), this protein is Small ribosomal subunit protein bS16.